The chain runs to 649 residues: MEGPSSSSVPTASDAPSKYLLPSDSDDGIATSSAANVGARNHVTNTEKMEKEKKPSPMVLNVDPDYDYDEEDGGSCEEDQRGPPAPISREIVDGAIARRSRDRQISPGVKMSIGNYDDMEDDDEEAETPEEQKQRFLASMKRIRNQPQEAFDPPEDTEAMREFINRQVNDAMMFNRDNHIDYSPVNKPKEAKIIEGYLWGGIIGTGSYGKVKEVIDIYTITRRAAKIMKYEKLRKIPNGWDNIRSEMSILRRLNHRNIVKLIEVFNLPEKGKVYMIFEYCIGSVQNLIDMEPAHRLSIGESHAIFLELCHGLNYLHSKRVSHKDIKPGNLLLSIDMTVKICDFGVAEQICLFQSDGRCTKVNGTPKFQPPECVYGNHEYFDGYKVDMWSAGVTLYNMVSGKYPFEQQVLLRLYESIGTNPVEMPTNVELSKDLQDIIKRLLDKDFNTRPNISDVMQHPWFQTGFPEDQGLGRIMERMRTGDRPFTMYPSLQAMYDGAGSEVILDEDGNELVLPPPDLVKRGLKFFLELKILENLPGTLSLSSFPGFQTLEKRPGDGPPPSSDSGVVAAPDSASGDPLRRPSSRSMPTSAPPRPPSGAVEVVEAVAAPEAVVEDPVVEEAPAQQQEAPDRRRRGKRSLFSCIFRSRTDSS.

Over residues 1–11 the composition is skewed to polar residues; sequence MEGPSSSSVPT. The disordered stretch occupies residues 1–132; that stretch reads MEGPSSSSVP…DEEAETPEEQ (132 aa). Positions 45-55 are enriched in basic and acidic residues; the sequence is NTEKMEKEKKP. 2 stretches are compositionally biased toward acidic residues: residues 64–77 and 117–129; these read PDYDYDEEDGGSCE and DDMEDDDEEAETP. In terms of domain architecture, Protein kinase spans 197–460; it reads YLWGGIIGTG…ISDVMQHPWF (264 aa). ATP is bound by residues 203–211 and K226; that span reads IGTGSYGKV. The active-site Proton acceptor is D324. Residues 548-649 form a disordered region; the sequence is TLEKRPGDGP…CIFRSRTDSS (102 aa). A compositionally biased stretch (low complexity) spans 597–609; it reads AVEVVEAVAAPEA.

It belongs to the protein kinase superfamily. CAMK Ser/Thr protein kinase family. LKB1 subfamily. Mg(2+) serves as cofactor. It depends on Mn(2+) as a cofactor.

It is found in the cytoplasm. Its subcellular location is the cell cortex. The enzyme catalyses L-seryl-[protein] + ATP = O-phospho-L-seryl-[protein] + ADP + H(+). The catalysed reaction is L-threonyl-[protein] + ATP = O-phospho-L-threonyl-[protein] + ADP + H(+). Functionally, required for cytoplasmic partitioning and asymmetric cell division in early embryogenesis. Phosphorylates and restricts the asymmetry effectors mex-5 and mex-6 to the anterior cytoplasm of the zygote and maintains these phosphorylations until fertilization. Phosphorylates and regulates aak-2 in response to oxidative stress. May also play a role in motility, behavioral response, regulation of lifespan and dauer formation through this pathway. This Caenorhabditis briggsae protein is Serine/threonine-protein kinase par-4.